The sequence spans 359 residues: ELAV-like protein 2 (359 aa).

Residues 1 to 33 (METQLSNGPTCNNTANGPTTINNNCSSPVDSGN) form a disordered region. 2 RRM domains span residues 39 to 117 (TNLI…YARP) and 125 to 205 (ANLY…FANN). Residue S221 is modified to Phosphoserine. Positions 276–354 (WCIFVYNLAP…RVLQVSFKTN (79 aa)) constitute an RRM 3 domain.

The protein belongs to the RRM elav family. In terms of assembly, interacts with IGF2BP1. Interacts with MAP1B light chain LC1.

RNA-binding protein that binds to the 3' untranslated region (3'UTR) of target mRNAs. Seems to recognize a GAAA motif. Can bind to its own 3'UTR, the FOS 3'UTR and the ID 3'UTR. The sequence is that of ELAV-like protein 2 (ELAVL2) from Pongo abelii (Sumatran orangutan).